The sequence spans 25 residues: Antimicrobial peptide 2 (25 aa).

Expressed by the skin glands.

It localises to the secreted. Functionally, has very strong antibacterial activity against Gram-positive bacterium S.aureus and very weak activity against Gram-negative bacterium E.coli. This chain is Antimicrobial peptide 2, found in Xenopus tropicalis (Western clawed frog).